A 133-amino-acid polypeptide reads, in one-letter code: Small ribosomal subunit protein uS8 (133 aa).

It belongs to the universal ribosomal protein uS8 family. In terms of assembly, part of the 30S ribosomal subunit. Contacts proteins S5 and S12.

In terms of biological role, one of the primary rRNA binding proteins, it binds directly to 16S rRNA central domain where it helps coordinate assembly of the platform of the 30S subunit. The polypeptide is Small ribosomal subunit protein uS8 (Cyanothece sp. (strain PCC 7425 / ATCC 29141)).